We begin with the raw amino-acid sequence, 194 residues long: ATP-dependent Clp protease proteolytic subunit (194 aa).

Ser-98 serves as the catalytic Nucleophile. His-123 is an active-site residue.

This sequence belongs to the peptidase S14 family. Component of the chloroplastic Clp protease core complex.

Its subcellular location is the plastid. The protein localises to the cyanelle. It carries out the reaction Hydrolysis of proteins to small peptides in the presence of ATP and magnesium. alpha-casein is the usual test substrate. In the absence of ATP, only oligopeptides shorter than five residues are hydrolyzed (such as succinyl-Leu-Tyr-|-NHMec, and Leu-Tyr-Leu-|-Tyr-Trp, in which cleavage of the -Tyr-|-Leu- and -Tyr-|-Trp bonds also occurs).. Functionally, cleaves peptides in various proteins in a process that requires ATP hydrolysis. Has a chymotrypsin-like activity. Plays a major role in the degradation of misfolded proteins. The protein is ATP-dependent Clp protease proteolytic subunit (clpP-A) of Cyanophora paradoxa.